Reading from the N-terminus, the 84-residue chain is Small ribosomal subunit protein bS20 (84 aa).

Residues 1 to 32 (MPRHESAKKRMRQNEKRQKRNKSQKSRVRTKI) are disordered.

It belongs to the bacterial ribosomal protein bS20 family.

Functionally, binds directly to 16S ribosomal RNA. The protein is Small ribosomal subunit protein bS20 of Salinibacter ruber (strain DSM 13855 / M31).